The chain runs to 320 residues: o-succinylbenzoate synthase (320 aa).

Lysine 133 acts as the Proton donor in catalysis. Mg(2+) is bound by residues aspartate 161, glutamate 190, and aspartate 213. The active-site Proton acceptor is lysine 235.

This sequence belongs to the mandelate racemase/muconate lactonizing enzyme family. MenC type 1 subfamily. A divalent metal cation serves as cofactor.

The catalysed reaction is (1R,6R)-6-hydroxy-2-succinyl-cyclohexa-2,4-diene-1-carboxylate = 2-succinylbenzoate + H2O. It participates in quinol/quinone metabolism; 1,4-dihydroxy-2-naphthoate biosynthesis; 1,4-dihydroxy-2-naphthoate from chorismate: step 4/7. Its pathway is quinol/quinone metabolism; menaquinone biosynthesis. Functionally, converts 2-succinyl-6-hydroxy-2,4-cyclohexadiene-1-carboxylate (SHCHC) to 2-succinylbenzoate (OSB). The protein is o-succinylbenzoate synthase of Escherichia coli O9:H4 (strain HS).